We begin with the raw amino-acid sequence, 297 residues long: Heme A synthase (297 aa).

Residues 1–6 are Cytoplasmic-facing; it reads MHKRLK. A helical transmembrane segment spans residues 7-27; sequence IYSVITSIGVLIVLLQGALVT. At 28–62 the chain is on the extracellular side; it reads KTGSGEGCGATWPLCFGEVIPTNPAIETIIEYSHR. A disulfide bond links Cys-35 and Cys-42. Glu-58 is a catalytic residue. His-61 provides a ligand contact to heme o. The helical transmembrane segment at 63–83 threads the bilayer; that stretch reads IVSGLVGAMIIILAIWAWKQL. The Cytoplasmic segment spans residues 84–93; sequence KHMREAKALS. The chain crosses the membrane as a helical span at residues 94–114; the sequence is FAAVILIIFQGLLGAGAVVFG. Topologically, residues 115–118 are extracellular; it reads QSKA. Residues 119–139 traverse the membrane as a helical segment; that stretch reads ILALHFGISAMSLAAVVLLTI. A heme o-binding site is contributed by His-123. Topologically, residues 140 to 156 are cytoplasmic; that stretch reads LAFEDGREHTMAPKVSR. A helical membrane pass occupies residues 157 to 177; the sequence is GFKYYVFFVITYCYAVIYSGA. Topologically, residues 178–210 are extracellular; it reads YVKHSEATLACAGFPLCNGQIFPGLYGPVGAHY. A disulfide bridge connects residues Cys-188 and Cys-194. Residues 211-231 traverse the membrane as a helical segment; that stretch reads FHRVVGTILLLFLLILMIWTL. His-212 is a heme b binding site. Residues 232 to 242 are Cytoplasmic-facing; that stretch reads SRYRHYRVLTW. Residues 243–263 form a helical membrane-spanning segment; that stretch reads TAVLSFLLVVGQFISGISIVF. At 264-271 the chain is on the extracellular side; sequence TQNALSVG. A helical transmembrane segment spans residues 272–292; sequence LIHALIISILFSALSYMTMII. His-274 contributes to the heme b binding site. At 293 to 297 the chain is on the cytoplasmic side; it reads TRPSH.

Belongs to the COX15/CtaA family. Type 1 subfamily. In terms of assembly, interacts with CtaB. Heme b serves as cofactor.

It localises to the cell membrane. It catalyses the reaction Fe(II)-heme o + 2 A + H2O = Fe(II)-heme a + 2 AH2. Its pathway is porphyrin-containing compound metabolism; heme A biosynthesis; heme A from heme O: step 1/1. Its function is as follows. Catalyzes the conversion of heme O to heme A by two successive hydroxylations of the methyl group at C8. The first hydroxylation forms heme I, the second hydroxylation results in an unstable dihydroxymethyl group, which spontaneously dehydrates, resulting in the formyl group of heme A. The polypeptide is Heme A synthase (Alkalihalophilus pseudofirmus (strain ATCC BAA-2126 / JCM 17055 / OF4) (Bacillus pseudofirmus)).